A 380-amino-acid polypeptide reads, in one-letter code: Cytochrome b (380 aa).

Transmembrane regions (helical) follow at residues 34 to 54, 78 to 99, 114 to 134, and 179 to 199; these read FGSLLGICLLTQILTGLLLAT, WLIRNLHANGASFFFICIYLHI, WNTGVILLLTLMATAFVGYVL, and FFALHFLLPFMIAGLALIHLT. Heme b is bound by residues His-84 and His-98. Positions 183 and 197 each coordinate heme b. Residue His-202 coordinates a ubiquinone. Transmembrane regions (helical) follow at residues 227-247, 289-309, 321-341, and 348-368; these read LKDILGFIIMFLPLTTLALFS, LGGVLALAASVLVLFLTPLLH, LSQLLFWTLVTNLCILTWVGS, and FIIIGQLASLTYFTILLLLFP.

Belongs to the cytochrome b family. In terms of assembly, the cytochrome bc1 complex contains 11 subunits: 3 respiratory subunits (MT-CYB, CYC1 and UQCRFS1), 2 core proteins (UQCRC1 and UQCRC2) and 6 low-molecular weight proteins (UQCRH/QCR6, UQCRB/QCR7, UQCRQ/QCR8, UQCR10/QCR9, UQCR11/QCR10 and a cleavage product of UQCRFS1). This cytochrome bc1 complex then forms a dimer. It depends on heme b as a cofactor.

The protein resides in the mitochondrion inner membrane. Component of the ubiquinol-cytochrome c reductase complex (complex III or cytochrome b-c1 complex) that is part of the mitochondrial respiratory chain. The b-c1 complex mediates electron transfer from ubiquinol to cytochrome c. Contributes to the generation of a proton gradient across the mitochondrial membrane that is then used for ATP synthesis. The chain is Cytochrome b (MT-CYB) from Cepphus grylle (Black guillemot).